Reading from the N-terminus, the 365-residue chain is LIM and cysteine-rich domains protein 1 (365 aa).

The residue at position 16 (Ser-16) is a Phosphoserine. Residues 99–206 form the PET domain; the sequence is MIMTNPIATG…GEVALPGQGG (108 aa). Residues 200 to 235 are disordered; that stretch reads ALPGQGGLPKEEGKQQEKPEGAETTAATTNGSLSDP. The span at 208-220 shows a compositional bias: basic and acidic residues; it reads PKEEGKQQEKPEG. 2 LIM zinc-binding domains span residues 241–306 and 307–365; these read YVCE…SLRP and RCSG…SKRS.

Interacts with GATA1 and GATA4. Interacts with beta-dystroglycan. Interacts with GATA6. As to expression, expressed in the heart (at protein level). Expressed in many tissues with highest abundance in skeletal muscle.

It is found in the cytoplasm. Its subcellular location is the nucleus. Functionally, transcriptional cofactor that restricts GATA6 function by inhibiting DNA-binding, resulting in repression of GATA6 transcriptional activation of downstream target genes. Represses GATA6-mediated trans activation of lung- and cardiac tissue-specific promoters. Inhibits DNA-binding by GATA4 and GATA1 to the cTNC promoter. Plays a critical role in the development of cardiac hypertrophy via activation of calcineurin/nuclear factor of activated T-cells signaling pathway. The sequence is that of LIM and cysteine-rich domains protein 1 (LMCD1) from Homo sapiens (Human).